The sequence spans 345 residues: Holliday junction branch migration complex subunit RuvB (345 aa).

The interval 3–187 (LDILQNRNNL…FGFTARLDFY (185 aa)) is large ATPase domain (RuvB-L). Residues Leu-26, Arg-27, Gly-68, Lys-71, Thr-72, Thr-73, 134–136 (EDF), Arg-177, Tyr-187, and Arg-224 contribute to the ATP site. Residue Thr-72 participates in Mg(2+) binding. The segment at 188–259 (SPEELLQVLI…IALKAMDVYE (72 aa)) is small ATPAse domain (RuvB-S). The segment at 262–345 (SLGLDRLDRA…EDLSGFELYL (84 aa)) is head domain (RuvB-H). DNA is bound by residues Arg-317 and Arg-322.

Belongs to the RuvB family. Homohexamer. Forms an RuvA(8)-RuvB(12)-Holliday junction (HJ) complex. HJ DNA is sandwiched between 2 RuvA tetramers; dsDNA enters through RuvA and exits via RuvB. An RuvB hexamer assembles on each DNA strand where it exits the tetramer. Each RuvB hexamer is contacted by two RuvA subunits (via domain III) on 2 adjacent RuvB subunits; this complex drives branch migration. In the full resolvosome a probable DNA-RuvA(4)-RuvB(12)-RuvC(2) complex forms which resolves the HJ.

It is found in the cytoplasm. The catalysed reaction is ATP + H2O = ADP + phosphate + H(+). In terms of biological role, the RuvA-RuvB-RuvC complex processes Holliday junction (HJ) DNA during genetic recombination and DNA repair, while the RuvA-RuvB complex plays an important role in the rescue of blocked DNA replication forks via replication fork reversal (RFR). RuvA specifically binds to HJ cruciform DNA, conferring on it an open structure. The RuvB hexamer acts as an ATP-dependent pump, pulling dsDNA into and through the RuvAB complex. RuvB forms 2 homohexamers on either side of HJ DNA bound by 1 or 2 RuvA tetramers; 4 subunits per hexamer contact DNA at a time. Coordinated motions by a converter formed by DNA-disengaged RuvB subunits stimulates ATP hydrolysis and nucleotide exchange. Immobilization of the converter enables RuvB to convert the ATP-contained energy into a lever motion, pulling 2 nucleotides of DNA out of the RuvA tetramer per ATP hydrolyzed, thus driving DNA branch migration. The RuvB motors rotate together with the DNA substrate, which together with the progressing nucleotide cycle form the mechanistic basis for DNA recombination by continuous HJ branch migration. Branch migration allows RuvC to scan DNA until it finds its consensus sequence, where it cleaves and resolves cruciform DNA. In Tropheryma whipplei (strain TW08/27) (Whipple's bacillus), this protein is Holliday junction branch migration complex subunit RuvB.